Reading from the N-terminus, the 189-residue chain is GTP cyclohydrolase 1 (189 aa).

The Zn(2+) site is built by C79, H82, and C151.

The protein belongs to the GTP cyclohydrolase I family. Toroid-shaped homodecamer, composed of two pentamers of five dimers.

It catalyses the reaction GTP + H2O = 7,8-dihydroneopterin 3'-triphosphate + formate + H(+). It functions in the pathway cofactor biosynthesis; 7,8-dihydroneopterin triphosphate biosynthesis; 7,8-dihydroneopterin triphosphate from GTP: step 1/1. The sequence is that of GTP cyclohydrolase 1 from Lactiplantibacillus plantarum (strain ATCC BAA-793 / NCIMB 8826 / WCFS1) (Lactobacillus plantarum).